The sequence spans 874 residues: Adhesion G-protein coupled receptor D1 (874 aa).

The signal sequence occupies residues 1–25 (MEKLLRLCCWYSWLLLFYYNFQVRG). Residues 26–567 (VYSRSQDHPG…LARGHQVALS (542 aa)) are Extracellular-facing. The region spanning 79–276 (KGVTLLYYGR…ASPVMPTDAY (198 aa)) is the Pentraxin (PTX) domain. Asn-90, Asn-185, Asn-282, Asn-302, Asn-319, Asn-394, Asn-476, Asn-501, and Asn-533 each carry an N-linked (GlcNAc...) asparagine glycan. The 187-residue stretch at 371-557 (QVTVEGSSAM…AILMQVVPLE (187 aa)) folds into the GAIN-B domain. 2 disulfides stabilise this stretch: Cys-510–Cys-539 and Cys-527–Cys-541. The GPS stretch occupies residues 510 to 557 (CAFLDFSSGEGVWSNHGCALTRGNLTYSVCRCTHLTNFAILMQVVPLE). The stachel stretch occupies residues 546 to 554 (NFAILMQVV). Gln-563 lines the 17beta-hydroxy-5alpha-androstan-3-one pocket. Residues 568–590 (SISYVGCSLSVLCLVATLVTFAV) traverse the membrane as a helical segment. Over 591–601 (LSSVSTIRNQR) the chain is Cytoplasmic. Residues 602 to 623 (YHIHANLSFAVLVAQVLLLISF) form a helical membrane-spanning segment. At 624–632 (RLEPGTTPC) the chain is on the extracellular side. The cysteines at positions 632 and 704 are disulfide-linked. The chain crosses the membrane as a helical span at residues 633-655 (QVMAVLLHYFFLSAFAWMLVEGL). The Cytoplasmic portion of the chain corresponds to 656–673 (HLYSMVIKVFGSEDSKHR). The chain crosses the membrane as a helical span at residues 674-695 (YYYGMGWGFPLLICIISLSFAM). Over 696–710 (DSYGTSNNCWLSLAS) the chain is Extracellular. The helical transmembrane segment at 711–732 (GAIWAFVAPALFVIVVNIGILI) threads the bilayer. Topologically, residues 733 to 757 (AVTRVISQISADNYKIHGDPSAFKL) are cytoplasmic. Residues 758 to 780 (TAKAVAVLLPILGTSWVFGVLAV) form a helical membrane-spanning segment. Residues 781–783 (NGC) lie on the Extracellular side of the membrane. Residues 784-810 (AVVFQYMFATLNSLQGLFIFLFHCLLN) traverse the membrane as a helical segment. Asn-795 is a binding site for 17beta-hydroxy-5alpha-androstan-3-one. Residues 811–874 (SEVRAAFKHK…SAHRVDLSAV (64 aa)) are Cytoplasmic-facing. The disordered stretch occupies residues 854–874 (TKLSPWDKSSHSAHRVDLSAV). The segment covering 861 to 874 (KSSHSAHRVDLSAV) has biased composition (basic and acidic residues).

It belongs to the G-protein coupled receptor 2 family. Adhesion G-protein coupled receptor (ADGR) subfamily. In terms of assembly, heterodimer of 2 chains generated by proteolytic processing; the large extracellular N-terminal fragment and the membrane-bound C-terminal fragment predominantly remain associated and non-covalently linked. Interacts with ESYT1; interaction takes place in absence of cytosolic calcium and inhibits the G protein-coupled receptor activity of ADGRD1. In terms of processing, autoproteolytically processed at the GPS region of the GAIN-B domain; this cleavage modulates receptor activity. Cleavage takes place early in the secretory pathway before N-glycosylation. As to expression, up-regulated in CD133(+) cell population of glioblastoma.

It localises to the cell membrane. Its activity is regulated as follows. Forms a heterodimer of 2 chains generated by proteolytic processing that remain associated through non-covalent interactions mediated by the GAIN-B domain. In the inactivated receptor, the Stachel sequence (also named stalk) is embedded in the GAIN-B domain, where it adopts a beta-strand conformation. On activation, the Stachel moves into the 7 transmembrane region and adopts a twisted hook-shaped configuration that forms contacts within the receptor, leading to coupling of a G-alpha protein, which activates signaling. The cleaved GAIN-B and N-terminal domains can then dissociate from the rest of the receptor. Interaction with ESYT1 in absence of cytosolic calcium inhibits the G protein-coupled receptor activity; interaction and inhibition is relieved when cytosolic calcium increases. Activated by AP503, a small molecule that activates ADGRD1 without activating androgen nuclear receptors: AP503 enhances muscle strength without eliciting androgenic adverse effects. Activated by the 8E3E8 antibody that targets the N-terminus. Its function is as follows. Adhesion G-protein coupled receptor (aGPCR) for androgen hormone 5alpha-dihydrotestosterone (5alpha-DHT), also named 17beta-hydroxy-5alpha-androstan-3-one, the most potent hormone among androgens. Also activated by methenolone drug. Ligand binding causes a conformation change that triggers signaling via guanine nucleotide-binding proteins (G proteins) and modulates the activity of downstream effectors, such as adenylate cyclase. ADGRD1 is coupled to G(s) G proteins and mediates activation of adenylate cyclase activity. Acts as a 5alpha-DHT receptor in muscle cells, thereby increasing intracellular cyclic AMP (cAMP) levels and enhancing muscle strength. This Homo sapiens (Human) protein is Adhesion G-protein coupled receptor D1.